The following is a 318-amino-acid chain: Acetyl-coenzyme A carboxylase carboxyl transferase subunit alpha (318 aa).

In terms of domain architecture, CoA carboxyltransferase C-terminal spans 39–292 (LTDKSEKQLR…GDSIAAELPD (254 aa)).

The protein belongs to the AccA family. As to quaternary structure, acetyl-CoA carboxylase is a heterohexamer composed of biotin carboxyl carrier protein (AccB), biotin carboxylase (AccC) and two subunits each of ACCase subunit alpha (AccA) and ACCase subunit beta (AccD).

It localises to the cytoplasm. The enzyme catalyses N(6)-carboxybiotinyl-L-lysyl-[protein] + acetyl-CoA = N(6)-biotinyl-L-lysyl-[protein] + malonyl-CoA. It functions in the pathway lipid metabolism; malonyl-CoA biosynthesis; malonyl-CoA from acetyl-CoA: step 1/1. Component of the acetyl coenzyme A carboxylase (ACC) complex. First, biotin carboxylase catalyzes the carboxylation of biotin on its carrier protein (BCCP) and then the CO(2) group is transferred by the carboxyltransferase to acetyl-CoA to form malonyl-CoA. The protein is Acetyl-coenzyme A carboxylase carboxyl transferase subunit alpha of Gluconacetobacter diazotrophicus (strain ATCC 49037 / DSM 5601 / CCUG 37298 / CIP 103539 / LMG 7603 / PAl5).